We begin with the raw amino-acid sequence, 73 residues long: UPF0235 protein LBL_1291 (73 aa).

Belongs to the UPF0235 family.

This is UPF0235 protein LBL_1291 from Leptospira borgpetersenii serovar Hardjo-bovis (strain L550).